A 135-amino-acid polypeptide reads, in one-letter code: Large ribosomal subunit protein uL16c (135 aa).

The protein belongs to the universal ribosomal protein uL16 family. In terms of assembly, part of the 50S ribosomal subunit.

Its subcellular location is the plastid. The protein resides in the chloroplast. In Daucus carota (Wild carrot), this protein is Large ribosomal subunit protein uL16c.